We begin with the raw amino-acid sequence, 846 residues long: Choline trimethylamine-lyase (846 aa).

In terms of domain architecture, PFL spans 60–718 (PRHVKLKENF…LLGASANGRR (659 aa)). C489 functions as the Cysteine radical intermediate in the catalytic mechanism. The active-site Proton acceptor is E491. Residues 725 to 846 (DGISPTQGAD…IISRTMLHGF (122 aa)) form the Glycine radical domain. G821 is subject to Glycine radical.

The protein belongs to the glycyl radical enzyme (GRE) family. CutC subfamily. In terms of assembly, homodimer. Post-translationally, requires the activating protein CutD to generate the key active site glycyl radical on Gly-821 that is involved in catalysis.

It carries out the reaction choline = trimethylamine + acetaldehyde. It participates in amine and polyamine metabolism; choline degradation. In terms of biological role, glycine radical enzyme that catalyzes the cleavage of a C-N bond in choline, producing trimethylamine (TMA) and acetaldehyde. Is involved in the anaerobic choline utilization pathway that allows D.alaskensis to grow on choline as a source of carbon and energy. Is strictly specific for choline as substrate. The protein is Choline trimethylamine-lyase of Oleidesulfovibrio alaskensis (strain ATCC BAA-1058 / DSM 17464 / G20) (Desulfovibrio alaskensis).